The primary structure comprises 69 residues: Ribosome modulation factor (69 aa).

Belongs to the ribosome modulation factor family.

It localises to the cytoplasm. In terms of biological role, during stationary phase, converts 70S ribosomes to an inactive dimeric form (100S ribosomes). The chain is Ribosome modulation factor from Marinomonas mediterranea (strain ATCC 700492 / JCM 21426 / NBRC 103028 / MMB-1).